Reading from the N-terminus, the 155-residue chain is Large ribosomal subunit protein uL22 (155 aa).

It belongs to the universal ribosomal protein uL22 family. Part of the 50S ribosomal subunit.

Functionally, this protein binds specifically to 23S rRNA. It makes multiple contacts with different domains of the 23S rRNA in the assembled 50S subunit and ribosome. The globular domain of the protein is located near the polypeptide exit tunnel on the outside of the subunit, while an extended beta-hairpin is found that lines the wall of the exit tunnel in the center of the 70S ribosome. The polypeptide is Large ribosomal subunit protein uL22 (Pyrococcus horikoshii (strain ATCC 700860 / DSM 12428 / JCM 9974 / NBRC 100139 / OT-3)).